Reading from the N-terminus, the 133-residue chain is Small ribosomal subunit protein uS8 (133 aa).

This sequence belongs to the universal ribosomal protein uS8 family. As to quaternary structure, part of the 30S ribosomal subunit. Contacts proteins S5 and S12.

In terms of biological role, one of the primary rRNA binding proteins, it binds directly to 16S rRNA central domain where it helps coordinate assembly of the platform of the 30S subunit. The sequence is that of Small ribosomal subunit protein uS8 from Gloeobacter violaceus (strain ATCC 29082 / PCC 7421).